The primary structure comprises 247 residues: Probable dihydroorotate dehydrogenase B (NAD(+)), electron transfer subunit (247 aa).

The FAD-binding FR-type domain occupies 1-87 (MLRRVSIEET…RGPYGHGFSG (87 aa)). C201, C206, C209, and C217 together coordinate [2Fe-2S] cluster.

It belongs to the PyrK family. As to quaternary structure, heterotetramer of 2 PyrK and 2 PyrD type B subunits. [2Fe-2S] cluster is required as a cofactor. Requires FAD as cofactor.

It functions in the pathway pyrimidine metabolism; UMP biosynthesis via de novo pathway; orotate from (S)-dihydroorotate (NAD(+) route): step 1/1. Responsible for channeling the electrons from the oxidation of dihydroorotate from the FMN redox center in the PyrD type B subunit to the ultimate electron acceptor NAD(+). This Pyrococcus furiosus (strain ATCC 43587 / DSM 3638 / JCM 8422 / Vc1) protein is Probable dihydroorotate dehydrogenase B (NAD(+)), electron transfer subunit.